The primary structure comprises 363 residues: UDP-N-acetylglucosamine--N-acetylmuramyl-(pentapeptide) pyrophosphoryl-undecaprenol N-acetylglucosamine transferase (363 aa).

Residues 12 to 14 (TAG), R166, S196, and Q291 each bind UDP-N-acetyl-alpha-D-glucosamine.

The protein belongs to the glycosyltransferase 28 family. MurG subfamily.

It is found in the cell inner membrane. It carries out the reaction di-trans,octa-cis-undecaprenyl diphospho-N-acetyl-alpha-D-muramoyl-L-alanyl-D-glutamyl-meso-2,6-diaminopimeloyl-D-alanyl-D-alanine + UDP-N-acetyl-alpha-D-glucosamine = di-trans,octa-cis-undecaprenyl diphospho-[N-acetyl-alpha-D-glucosaminyl-(1-&gt;4)]-N-acetyl-alpha-D-muramoyl-L-alanyl-D-glutamyl-meso-2,6-diaminopimeloyl-D-alanyl-D-alanine + UDP + H(+). Its pathway is cell wall biogenesis; peptidoglycan biosynthesis. In terms of biological role, cell wall formation. Catalyzes the transfer of a GlcNAc subunit on undecaprenyl-pyrophosphoryl-MurNAc-pentapeptide (lipid intermediate I) to form undecaprenyl-pyrophosphoryl-MurNAc-(pentapeptide)GlcNAc (lipid intermediate II). This Legionella pneumophila (strain Paris) protein is UDP-N-acetylglucosamine--N-acetylmuramyl-(pentapeptide) pyrophosphoryl-undecaprenol N-acetylglucosamine transferase.